Consider the following 260-residue polypeptide: Caveolae-associated protein 3 (260 aa).

Residues 1-84 (MGESALESGP…SNTLAQLLAK (84 aa)) are interaction with CAVIN1. The segment at 20-78 (VHAVTVVTLLEKLATMLETLRERQGGLAQRQGGLAGSVRRIQSNLGALSRSHDTTSNTL) is leucine-zipper. Phosphoserine is present on residues serine 62 and serine 70. Lysine 128 participates in a covalent cross-link: Glycyl lysine isopeptide (Lys-Gly) (interchain with G-Cter in SUMO2). Residues 135–201 (AKAFQKAPEP…SGRKGHAAPT (67 aa)) form an interaction with CAV1 region. Positions 140-260 (KAPEPLGPVE…AAVLQVESAA (121 aa)) are disordered. Positions 157 to 168 (AEAEESSDEEEP) are enriched in acidic residues. Residues serine 162, serine 163, and serine 171 each carry the phosphoserine modification. Residues 201-210 (TPTPVKPPRL) show a composition bias toward pro residues.

Belongs to the CAVIN family. In terms of assembly, component of the CAVIN complex composed of CAVIN1, CAVIN2, CAVIN3 and CAVIN4. Interacts with PRKCD and with phosphatidylserine. Phosphatidylserine may form a bridge between PKC and PKC-binding partners and stabilize the binding. Interacts with PER2. Interacts with CAVIN1 and EPS15L1. Interacts (via leucine-zipper domain) with CAV1 in a cholesterol-sensitive manner. Post-translationally, in vitro, phosphorylated by PRKCD.

The protein resides in the cytoplasm. It localises to the membrane. Its subcellular location is the caveola. The protein localises to the cytosol. Its function is as follows. Regulates the traffic and/or budding of caveolae. Plays a role in caveola formation in a tissue-specific manner. Required for the formation of caveolae in smooth muscle but not in the lung and heart endothelial cells. Regulates the equilibrium between cell surface-associated and cell surface-dissociated caveolae by promoting the rapid release of caveolae from the cell surface. Plays a role in the regulation of the circadian clock. Modulates the period length and phase of circadian gene expression and also regulates expression and interaction of the core clock components PER1/2 and CRY1/2. This chain is Caveolae-associated protein 3 (CAVIN3), found in Bos taurus (Bovine).